The primary structure comprises 341 residues: MLVKEYSFTLPDELIARYPANQRDGSRLMVLDRQTAARSEIAFSQIVEWLRPDDLLVLNDTKVIPARLFGQKETGGRIELFLVEPVGDACWRCLLRSSKRCRTGQSIRLAEGVTAEVVEQLGEQDWLIRFHGSDDFESWLQRVGQMPIPPYLNRESEELDRVRYQTVYASESGAVAAPTAGLHFTQELLERIQEKGIRLARVTLHVGLGTFQPVRVERVQDHVIHRERYRLPSETAAAVTETRARGGRVIAVGTTACRTLEYAADNAGHLQAGQGEADIFIYPGYRFKVVDALLTNFHLPESTLLMLVSAFGGKEFILSAYEAAVNRQFRFYSYGDAMLIV.

It belongs to the QueA family. As to quaternary structure, monomer.

The protein resides in the cytoplasm. It carries out the reaction 7-aminomethyl-7-carbaguanosine(34) in tRNA + S-adenosyl-L-methionine = epoxyqueuosine(34) in tRNA + adenine + L-methionine + 2 H(+). It participates in tRNA modification; tRNA-queuosine biosynthesis. In terms of biological role, transfers and isomerizes the ribose moiety from AdoMet to the 7-aminomethyl group of 7-deazaguanine (preQ1-tRNA) to give epoxyqueuosine (oQ-tRNA). This Trichlorobacter lovleyi (strain ATCC BAA-1151 / DSM 17278 / SZ) (Geobacter lovleyi) protein is S-adenosylmethionine:tRNA ribosyltransferase-isomerase.